We begin with the raw amino-acid sequence, 366 residues long: tRNA/tmRNA (uracil-C(5))-methyltransferase (366 aa).

S-adenosyl-L-methionine-binding residues include Q190, Y218, N223, E239, and D299. Catalysis depends on C324, which acts as the Nucleophile. The Proton acceptor role is filled by E358.

This sequence belongs to the class I-like SAM-binding methyltransferase superfamily. RNA M5U methyltransferase family. TrmA subfamily.

It catalyses the reaction uridine(54) in tRNA + S-adenosyl-L-methionine = 5-methyluridine(54) in tRNA + S-adenosyl-L-homocysteine + H(+). The enzyme catalyses uridine(341) in tmRNA + S-adenosyl-L-methionine = 5-methyluridine(341) in tmRNA + S-adenosyl-L-homocysteine + H(+). In terms of biological role, dual-specificity methyltransferase that catalyzes the formation of 5-methyluridine at position 54 (m5U54) in all tRNAs, and that of position 341 (m5U341) in tmRNA (transfer-mRNA). This is tRNA/tmRNA (uracil-C(5))-methyltransferase from Cronobacter sakazakii (strain ATCC BAA-894) (Enterobacter sakazakii).